Here is a 487-residue protein sequence, read N- to C-terminus: b(0,+)-type amino acid transporter 1 (487 aa).

The tract at residues 1 to 22 (MGETVPRRRREDEKSIQSDEPK) is disordered. The Cytoplasmic segment spans residues 1 to 31 (MGETVPRRRREDEKSIQSDEPKTTSLQKEVG). Phosphoserine is present on Ser18. The chain crosses the membrane as a helical span at residues 32–55 (LISGICIIVGTIIGSGIFISPKSV). 43–47 (IIGSG) contacts L-arginine. The Extracellular segment spans residues 56–62 (LSNTQAV). The chain crosses the membrane as a helical span at residues 63–84 (GPCLIIWAACGVLGTLGALCFA). The Cytoplasmic segment spans residues 85–110 (ELGTMITKSGGEYPYLMEAFGPIPAY). Residues 111–137 (LFSWSSLLVMKPSSFAIICLSFSEYVA) form a helical membrane-spanning segment. Residues 138–147 (TPFYSGCEPP) are Extracellular-facing. Transmembrane regions (helical) follow at residues 148-169 (KVVV…NSLS) and 170-193 (VRLG…IIII). At 194 to 217 (SGLVLLAQGNTKNFENSFEGAEVS) the chain is on the extracellular side. A helical membrane pass occupies residues 218–238 (VGAISLALYNGLWAYDGWNQL). Asp233 contributes to the L-arginine binding site. Topologically, residues 239-251 (NYITEELRNPFRN) are cytoplasmic. The helical transmembrane segment at 252–274 (LPLAIIFGIPLVTVCYILINISY) threads the bilayer. Residues 275-302 (FTVMTPTELLQSQAVAVTFGDRVLYPAS) lie on the Extracellular side of the membrane. The chain crosses the membrane as a helical span at residues 303–325 (WIVPVFVAFSTIGAANGTCFTAG). Residues 326–351 (RLVYVAGREGHMLKVLSYISVRRLTP) are Cytoplasmic-facing. 2 helical membrane passes run 352–370 (APAI…IPGD) and 371–391 (INSL…LTIL). Residues 392 to 410 (GLIVMRFTRKELERPIKVP) lie on the Cytoplasmic side of the membrane. A helical membrane pass occupies residues 411 to 431 (IFIPILVTFIAAFLVLAPVIT). Topologically, residues 432-434 (NPA) are extracellular. A helical transmembrane segment spans residues 435–450 (WEYLYCVLFILSGLVF). The Cytoplasmic segment spans residues 451 to 487 (YFLFVYYKFEWAQKISKPITMHLQMLMEVVPPEPDPK).

It belongs to the amino acid-polyamine-organocation (APC) superfamily. In terms of assembly, disulfide-linked heterodimer composed of the catalytic light chain subunit SLC7A9 and the heavy chain subunit. The heterodimer is the minimal functional unit. Assembles in heterotetramers (dimers of heterodimers) and higher order oligomers. Interacts with CAV1. Kidney and small intestine.

Its subcellular location is the apical cell membrane. It carries out the reaction L-leucine(out) + L-arginine(in) = L-leucine(in) + L-arginine(out). It catalyses the reaction L-histidine(out) + L-arginine(in) = L-histidine(in) + L-arginine(out). The enzyme catalyses L-arginine(in) + L-phenylalanine(out) = L-arginine(out) + L-phenylalanine(in). The catalysed reaction is L-cysteine(out) + L-arginine(in) = L-cysteine(in) + L-arginine(out). It carries out the reaction L-cystine(out) + L-arginine(in) = L-cystine(in) + L-arginine(out). It catalyses the reaction L-lysine(out) + L-arginine(in) = L-lysine(in) + L-arginine(out). In terms of biological role, mediates the electrogenic exchange between cationic amino acids and neutral amino acids, with a stoichiometry of 1:1. Has system b(0,+)-like activity with high affinity for extracellular cationic amino acids and L-cystine and lower affinity for intracellular neutral amino acids. Substrate exchange is driven by high concentration of intracellular neutral amino acids and the intracellular reduction of L-cystine to L-cysteine. Required for reabsorption of L-cystine and dibasic amino acids across the brush border membrane in renal proximal tubules. The chain is b(0,+)-type amino acid transporter 1 from Oryctolagus cuniculus (Rabbit).